Here is a 101-residue protein sequence, read N- to C-terminus: MKTPEDCTGLADIREAIDRIDLDIVQALGRRMDYVKAASRFKASEAAIPAPERVAAMLPERARWAEENGLDAPFVEGLFAQIIHWYIAEQIKYWRQTRGAA.

The Chorismate mutase domain maps to 4–94; that stretch reads PEDCTGLADI…WYIAEQIKYW (91 aa). Substrate-binding residues include Arg-14, Arg-31, Lys-42, and Gln-90.

In terms of assembly, dimer of dimers.

It carries out the reaction isochorismate = salicylate + pyruvate. The catalysed reaction is chorismate = prephenate. It participates in siderophore biosynthesis; salicylate biosynthesis. Its activity is regulated as follows. Inhibited by endo-oxabicyclic diacid resembling to the conformation of the transition state. Involved in the incorporation of salicylate into the siderophore pyochelin. Catalyzes the elimination of the enolpyruvyl side chain from isochorismate to yield salicylate and pyruvate via a rare pericyclic hydrogen transfer mechanism from C2 to C5. PchB also catalyzes the nonphysiological Claisen rearrangement of chorismate to prephenate in which the pyruvylenol tail is transferred from a C3 ether linkage to a C1-C9 linkage. The protein is Isochorismate pyruvate lyase of Pseudomonas aeruginosa (strain ATCC 15692 / DSM 22644 / CIP 104116 / JCM 14847 / LMG 12228 / 1C / PRS 101 / PAO1).